A 206-amino-acid polypeptide reads, in one-letter code: Holliday junction branch migration complex subunit RuvA (206 aa).

Residues 1 to 67 form a domain I region; sequence MIASIFGKIT…QILEEGFAFN (67 aa). The segment at 68–141 is domain II; that stretch reads TLEEKEWFSK…YDRDDGGKRI (74 aa). The segment at 141-145 is flexible linker; the sequence is IKPNT. The interval 146 to 206 is domain III; the sequence is AMANDYDEMF…QNNEVTNKTA (61 aa).

Belongs to the RuvA family. In terms of assembly, homotetramer. Forms an RuvA(8)-RuvB(12)-Holliday junction (HJ) complex. HJ DNA is sandwiched between 2 RuvA tetramers; dsDNA enters through RuvA and exits via RuvB. An RuvB hexamer assembles on each DNA strand where it exits the tetramer. Each RuvB hexamer is contacted by two RuvA subunits (via domain III) on 2 adjacent RuvB subunits; this complex drives branch migration. In the full resolvosome a probable DNA-RuvA(4)-RuvB(12)-RuvC(2) complex forms which resolves the HJ.

The protein resides in the cytoplasm. In terms of biological role, the RuvA-RuvB-RuvC complex processes Holliday junction (HJ) DNA during genetic recombination and DNA repair, while the RuvA-RuvB complex plays an important role in the rescue of blocked DNA replication forks via replication fork reversal (RFR). RuvA specifically binds to HJ cruciform DNA, conferring on it an open structure. The RuvB hexamer acts as an ATP-dependent pump, pulling dsDNA into and through the RuvAB complex. HJ branch migration allows RuvC to scan DNA until it finds its consensus sequence, where it cleaves and resolves the cruciform DNA. This chain is Holliday junction branch migration complex subunit RuvA, found in Mycoplasma pneumoniae (strain ATCC 29342 / M129 / Subtype 1) (Mycoplasmoides pneumoniae).